The sequence spans 567 residues: Urease subunit alpha (567 aa).

Residues 128-567 (GGIDPHIHFI…LPLAQLYHLF (440 aa)) enclose the Urease domain. Ni(2+) is bound by residues histidine 133, histidine 135, and lysine 216. Lysine 216 carries the post-translational modification N6-carboxylysine. Histidine 218 contacts substrate. 2 residues coordinate Ni(2+): histidine 245 and histidine 271. Residue histidine 319 is the Proton donor of the active site. Ni(2+) is bound at residue aspartate 359.

Belongs to the metallo-dependent hydrolases superfamily. Urease alpha subunit family. As to quaternary structure, heterotrimer of UreA (gamma), UreB (beta) and UreC (alpha) subunits. Three heterotrimers associate to form the active enzyme. Ni cation serves as cofactor. In terms of processing, carboxylation allows a single lysine to coordinate two nickel ions.

The protein localises to the cytoplasm. It carries out the reaction urea + 2 H2O + H(+) = hydrogencarbonate + 2 NH4(+). Its pathway is nitrogen metabolism; urea degradation; CO(2) and NH(3) from urea (urease route): step 1/1. This is Urease subunit alpha from Marinobacter nauticus (strain ATCC 700491 / DSM 11845 / VT8) (Marinobacter aquaeolei).